We begin with the raw amino-acid sequence, 286 residues long: L-cysteine S-thiosulfotransferase subunit SoxA (286 aa).

The signal sequence occupies residues 1-27; sequence MKKTIQRGLFTGALVLMTAMTAKPANA. A disulfide bridge connects residues C106 and C137. Positions 180–286 constitute a Cytochrome c domain; the sequence is DAYMKGKKFF…LKYNGPASRK (107 aa). Heme is bound by residues C200 and H204. R243 contacts substrate. Residue C247 coordinates heme. C247 acts as the Cysteine persulfide intermediate in catalysis.

This sequence belongs to the SoxA family. As to quaternary structure, heterodimer of SoxA and SoxX. The SoxAX complex interacts with CT1020, SoxAX-binding protein SaxB (SoxK); this interaction seems to be between SoxA and CT1020 and stimulates catalytic activity of the SoxAX complex. Requires heme as cofactor. In terms of processing, cysteine persulfide at Cys-247.

The protein resides in the periplasm. It catalyses the reaction L-cysteinyl-[SoxY protein] + thiosulfate + 2 Fe(III)-[cytochrome c] = S-sulfosulfanyl-L-cysteinyl-[SoxY protein] + 2 Fe(II)-[cytochrome c] + 2 H(+). The enzyme catalyses S-sulfanyl-L-cysteinyl-[SoxY protein] + thiosulfate + 2 Fe(III)-[cytochrome c] = S-(2-sulfodisulfanyl)-L-cysteinyl-[SoxY protein] + 2 Fe(II)-[cytochrome c] + 2 H(+). Functionally, C-type monoheme cytochrome, which is part of the SoxAX cytochrome complex involved in sulfur oxidation. The SoxAX complex catalyzes the formation of a heterodisulfide bond between the conserved cysteine residue on a sulfur carrier SoxYZ complex subunit SoxY and thiosulfate or other inorganic sulfur substrates. This leads to the liberation of two electrons, which may be transferred from the SoxAX complex to another cytochrome c and which then may be used for reductive CO(2) fixation. This Chlorobaculum tepidum (strain ATCC 49652 / DSM 12025 / NBRC 103806 / TLS) (Chlorobium tepidum) protein is L-cysteine S-thiosulfotransferase subunit SoxA.